Reading from the N-terminus, the 360-residue chain is Peptide chain release factor 1 (360 aa).

Gln237 carries the post-translational modification N5-methylglutamine.

Belongs to the prokaryotic/mitochondrial release factor family. Post-translationally, methylated by PrmC. Methylation increases the termination efficiency of RF1.

The protein resides in the cytoplasm. In terms of biological role, peptide chain release factor 1 directs the termination of translation in response to the peptide chain termination codons UAG and UAA. The sequence is that of Peptide chain release factor 1 from Pseudomonas aeruginosa (strain LESB58).